The primary structure comprises 496 residues: uncharacterized protein (496 aa).

Helical transmembrane passes span 5–25 (LTAL…GFLA), 45–65 (FGGL…YTFL), 77–97 (VAFF…FFLP), 127–147 (LVAI…LSGI), 161–181 (VKFV…FSGI), 193–213 (ILVW…HFNG), 239–259 (IPWF…WAHA), 278–298 (FLPL…IAFL), 325–345 (FAYA…AIGA), 374–394 (MVFV…TALV), 396–416 (LQLL…VSLF), 424–444 (ATVI…ITQS), and 450–470 (EGFW…PLFV).

Belongs to the sodium:solute symporter (SSF) (TC 2.A.21) family.

The protein localises to the cell membrane. This is an uncharacterized protein from Bacillus subtilis (strain 168).